The chain runs to 497 residues: Phenylalanine--tRNA ligase alpha subunit (497 aa).

L-phenylalanine is bound by residues threonine 329, 372-374 (QIE), and tyrosine 412. Glutamate 414 contacts Mg(2+). Phenylalanine 438 serves as a coordination point for L-phenylalanine.

This sequence belongs to the class-II aminoacyl-tRNA synthetase family. Phe-tRNA synthetase alpha subunit type 2 subfamily. As to quaternary structure, heterotetramer; dimer of two heterodimers formed by alpha and beta subunits. Mg(2+) serves as cofactor.

It is found in the cytoplasm. It catalyses the reaction tRNA(Phe) + L-phenylalanine + ATP = L-phenylalanyl-tRNA(Phe) + AMP + diphosphate + H(+). The sequence is that of Phenylalanine--tRNA ligase alpha subunit (farsa) from Danio rerio (Zebrafish).